A 503-amino-acid chain; its full sequence is Cytochrome P450 3A14 (503 aa).

Residue cysteine 442 coordinates heme.

Belongs to the cytochrome P450 family. The cofactor is heme.

Its subcellular location is the endoplasmic reticulum membrane. It localises to the microsome membrane. The catalysed reaction is an organic molecule + reduced [NADPH--hemoprotein reductase] + O2 = an alcohol + oxidized [NADPH--hemoprotein reductase] + H2O + H(+). Cytochromes P450 are a group of heme-thiolate monooxygenases. In liver microsomes, this enzyme is involved in an NADPH-dependent electron transport pathway. It oxidizes a variety of structurally unrelated compounds, including steroids, fatty acids, and xenobiotics. The chain is Cytochrome P450 3A14 (CYP3A14) from Cavia porcellus (Guinea pig).